The sequence spans 197 residues: Thymidine kinase (197 aa).

ATP is bound by residues 9–16 and 87–90; these read SAMDAGKT and DEIH. The active-site Proton acceptor is the E88. Zn(2+) contacts are provided by C145, C147, C187, and H190.

This sequence belongs to the thymidine kinase family. In terms of assembly, homotetramer.

Its subcellular location is the cytoplasm. It carries out the reaction thymidine + ATP = dTMP + ADP + H(+). In Francisella tularensis subsp. holarctica (strain LVS), this protein is Thymidine kinase.